A 152-amino-acid chain; its full sequence is 3-hydroxyacyl-[acyl-carrier-protein] dehydratase FabZ (152 aa).

H58 is a catalytic residue.

It belongs to the thioester dehydratase family. FabZ subfamily.

The protein resides in the cytoplasm. The catalysed reaction is a (3R)-hydroxyacyl-[ACP] = a (2E)-enoyl-[ACP] + H2O. In terms of biological role, involved in unsaturated fatty acids biosynthesis. Catalyzes the dehydration of short chain beta-hydroxyacyl-ACPs and long chain saturated and unsaturated beta-hydroxyacyl-ACPs. This is 3-hydroxyacyl-[acyl-carrier-protein] dehydratase FabZ from Prochlorococcus marinus (strain MIT 9312).